A 747-amino-acid chain; its full sequence is DNA ligase (747 aa).

Residues 113–117, 161–162, and Glu-190 each bind NAD(+); these read DRAYD and SI. The N6-AMP-lysine intermediate role is filled by Lys-192. Residues Arg-213, Glu-249, Lys-364, and Lys-388 each coordinate NAD(+). Residues Cys-479, Cys-482, Cys-495, and Cys-501 each coordinate Zn(2+). The BRCT domain occupies 660 to 747; the sequence is TTNAPLSDLT…EHDDTLTWPP (88 aa).

It belongs to the NAD-dependent DNA ligase family. LigA subfamily. The cofactor is Mg(2+). Mn(2+) is required as a cofactor.

It carries out the reaction NAD(+) + (deoxyribonucleotide)n-3'-hydroxyl + 5'-phospho-(deoxyribonucleotide)m = (deoxyribonucleotide)n+m + AMP + beta-nicotinamide D-nucleotide.. Its function is as follows. DNA ligase that catalyzes the formation of phosphodiester linkages between 5'-phosphoryl and 3'-hydroxyl groups in double-stranded DNA using NAD as a coenzyme and as the energy source for the reaction. It is essential for DNA replication and repair of damaged DNA. In Haloquadratum walsbyi (strain DSM 16790 / HBSQ001), this protein is DNA ligase.